The following is a 311-amino-acid chain: Lipoyl synthase (311 aa).

Residues C47, C52, C58, C73, C77, C80, and S286 each coordinate [4Fe-4S] cluster. The region spanning W59 to F276 is the Radical SAM core domain.

This sequence belongs to the radical SAM superfamily. Lipoyl synthase family. Requires [4Fe-4S] cluster as cofactor.

It localises to the cytoplasm. It catalyses the reaction [[Fe-S] cluster scaffold protein carrying a second [4Fe-4S](2+) cluster] + N(6)-octanoyl-L-lysyl-[protein] + 2 oxidized [2Fe-2S]-[ferredoxin] + 2 S-adenosyl-L-methionine + 4 H(+) = [[Fe-S] cluster scaffold protein] + N(6)-[(R)-dihydrolipoyl]-L-lysyl-[protein] + 4 Fe(3+) + 2 hydrogen sulfide + 2 5'-deoxyadenosine + 2 L-methionine + 2 reduced [2Fe-2S]-[ferredoxin]. It participates in protein modification; protein lipoylation via endogenous pathway; protein N(6)-(lipoyl)lysine from octanoyl-[acyl-carrier-protein]: step 2/2. In terms of biological role, catalyzes the radical-mediated insertion of two sulfur atoms into the C-6 and C-8 positions of the octanoyl moiety bound to the lipoyl domains of lipoate-dependent enzymes, thereby converting the octanoylated domains into lipoylated derivatives. This Chlamydia trachomatis serovar D (strain ATCC VR-885 / DSM 19411 / UW-3/Cx) protein is Lipoyl synthase.